An 821-amino-acid chain; its full sequence is Leucine--tRNA ligase (821 aa).

A 'HIGH' region motif is present at residues 42-52; the sequence is PYPSGKLHMGH. The 'KMSKS' region signature appears at 583–587; that stretch reads KMSKS. K586 serves as a coordination point for ATP.

It belongs to the class-I aminoacyl-tRNA synthetase family.

Its subcellular location is the cytoplasm. It catalyses the reaction tRNA(Leu) + L-leucine + ATP = L-leucyl-tRNA(Leu) + AMP + diphosphate. This Carboxydothermus hydrogenoformans (strain ATCC BAA-161 / DSM 6008 / Z-2901) protein is Leucine--tRNA ligase.